We begin with the raw amino-acid sequence, 62 residues long: Large ribosomal subunit protein uL29 (62 aa).

This sequence belongs to the universal ribosomal protein uL29 family.

The sequence is that of Large ribosomal subunit protein uL29 from Geotalea daltonii (strain DSM 22248 / JCM 15807 / FRC-32) (Geobacter daltonii).